The following is a 34-amino-acid chain: Delta-theraphotoxin-Hm1b (34 aa).

3 disulfides stabilise this stretch: Cys-2–Cys-16, Cys-9–Cys-21, and Cys-15–Cys-28. Position 34 is a phenylalanine amide (Phe-34).

It belongs to the neurotoxin 10 (Hwtx-1) family. 09 (HaTx) subfamily. Expressed by the venom gland.

Its subcellular location is the secreted. Gating-modifier toxin that potently and selectively acts on Nav1.1/SCN1A and Nav1.3/SCN3A. It enhances hNav1.1/SCN1A currents and delays fast inactivation of the channel (EC(50)=11.6 nM), leading to a sustained current. Similar effects are observed at Nav1.3/SCN3A (EC(50)=11.8 nM), but with less sustained currents. When tested on Nav1.2/SCN2A, the native toxin decreases the peak current by 50% at saturating concentration, whereas the recombinant toxin only shows a weak decrease of peak current. The native toxin specifically activates the voltage-gated sodium channel Nav1.1/SCN1A in somatosensory neurons to elicit acute pain and mechanical allodynia. When tested on Nav1.1/SCN1A, the toxin induces a hyperpolarising shift of the voltage-dependence of steady-state activation, and induces a depolarizing shift in the voltage dependence of inactivation. In addition, it does not modify the recovery from fast inactivation in Nav1.1/SCN1A. The toxin hydrophobic face probably interacts with the domain IV voltage-sensor of Nav1.1/SCN1A and Nav1.3/SCN3A and may trap the voltage-sensing S4 helix in a partially activated state. In vivo, intracerebroventricular injection into mice elicits convulsions, spasms, tremors and rapid death. When injected into mouse hindpaw, the toxin elicits an immediate and robust response to pain. However, intraplantar injection of toxin does not cause neurogenic inflammation or alter sensitivity to heat, indicative of a modality-specific effect on mechanosensitive neurons. The sequence is that of Delta-theraphotoxin-Hm1b from Heteroscodra maculata (Togo starburst tarantula).